Reading from the N-terminus, the 538-residue chain is Exo-alpha-bergamotene synthase (538 aa).

The Mg(2+) site is built by aspartate 291, aspartate 295, aspartate 435, threonine 439, and glutamate 443. The short motif at 291-295 (DDIYD) is the DDXXD motif element.

Belongs to the terpene synthase family. Requires Mg(2+) as cofactor. Mn(2+) serves as cofactor.

It catalyses the reaction (2E,6E)-farnesyl diphosphate = (1S,5S,6R)-alpha-bergamotene + diphosphate. Its function is as follows. Catalyzes a mixture of sesquiterpenoids from (2E,6E)-farnesyl diphosphate. Catalyzes the formation of exo-alpha-bergamotene, as well as (E)-nerolidol, (Z)-alpha-bisabolene, (E)-beta-farnesene and beta-sesquiphellandrene. Also has activity towards geranyl diphosphate, but to a much lesser extent. This is Exo-alpha-bergamotene synthase from Lavandula angustifolia (Lavender).